Here is an 882-residue protein sequence, read N- to C-terminus: Leucine--tRNA ligase (882 aa).

The 'HIGH' region motif lies at 43–53; that stretch reads PYPSGNLHMGH. The 'KMSKS' region motif lies at 632 to 636; it reads TMSKS. Residue lysine 635 participates in ATP binding.

It belongs to the class-I aminoacyl-tRNA synthetase family.

It localises to the cytoplasm. The catalysed reaction is tRNA(Leu) + L-leucine + ATP = L-leucyl-tRNA(Leu) + AMP + diphosphate. The polypeptide is Leucine--tRNA ligase (Synechococcus sp. (strain JA-2-3B'a(2-13)) (Cyanobacteria bacterium Yellowstone B-Prime)).